The following is a 51-amino-acid chain: Large ribosomal subunit protein bL33 (51 aa).

Belongs to the bacterial ribosomal protein bL33 family.

The sequence is that of Large ribosomal subunit protein bL33 from Psychrobacter arcticus (strain DSM 17307 / VKM B-2377 / 273-4).